A 109-amino-acid polypeptide reads, in one-letter code: Aquaporin-2 (109 aa).

At 1–6 (SVAFSR) the chain is on the cytoplasmic side. The chain crosses the membrane as a helical span at residues 7 to 27 (AVFAEFLATLLFVFFGLGSAL). Residues 28 to 35 (NWPQALPS) are Extracellular-facing. The helical transmembrane segment at 36 to 54 (VLQIAMAFGLGIGTLVQAL) threads the bilayer. The Cytoplasmic portion of the chain corresponds to 55-59 (GHVSG). An intramembrane region (discontinuously helical) is located at residues 60-69 (AHINPAVTVA). The short motif at 63 to 65 (NPA) is the NPA 1 element. The Cytoplasmic portion of the chain corresponds to 70 to 80 (CLVGCHVSFLR). A helical transmembrane segment spans residues 81-102 (AAFYVAAQLLGAVAGAALLHEI). The Extracellular segment spans residues 103–109 (TPPHVRG).

The protein belongs to the MIP/aquaporin (TC 1.A.8) family. As to quaternary structure, homotetramer. In terms of processing, serine phosphorylation is necessary and sufficient for expression at the apical membrane. Endocytosis is not phosphorylation-dependent. N-glycosylated.

It is found in the apical cell membrane. It localises to the basolateral cell membrane. The protein resides in the cell membrane. Its subcellular location is the cytoplasmic vesicle membrane. The protein localises to the golgi apparatus. It is found in the trans-Golgi network membrane. It carries out the reaction H2O(in) = H2O(out). It catalyses the reaction glycerol(in) = glycerol(out). Its function is as follows. Forms a water-specific channel that provides the plasma membranes of renal collecting duct with high permeability to water, thereby permitting water to move in the direction of an osmotic gradient. Plays an essential role in renal water homeostasis. Could also be permeable to glycerol. The chain is Aquaporin-2 from Canis lupus familiaris (Dog).